Reading from the N-terminus, the 938-residue chain is Isoleucine--tRNA ligase (938 aa).

Positions 58–68 (PYANGNIHIGH) match the 'HIGH' region motif. Glutamate 561 contributes to the L-isoleucyl-5'-AMP binding site. The short motif at 602–606 (KMSKS) is the 'KMSKS' region element. An ATP-binding site is contributed by lysine 605. The Zn(2+) site is built by cysteine 901, cysteine 904, cysteine 921, and cysteine 924.

The protein belongs to the class-I aminoacyl-tRNA synthetase family. IleS type 1 subfamily. In terms of assembly, monomer. Zn(2+) is required as a cofactor.

Its subcellular location is the cytoplasm. It catalyses the reaction tRNA(Ile) + L-isoleucine + ATP = L-isoleucyl-tRNA(Ile) + AMP + diphosphate. Catalyzes the attachment of isoleucine to tRNA(Ile). As IleRS can inadvertently accommodate and process structurally similar amino acids such as valine, to avoid such errors it has two additional distinct tRNA(Ile)-dependent editing activities. One activity is designated as 'pretransfer' editing and involves the hydrolysis of activated Val-AMP. The other activity is designated 'posttransfer' editing and involves deacylation of mischarged Val-tRNA(Ile). This Yersinia pestis bv. Antiqua (strain Angola) protein is Isoleucine--tRNA ligase.